Here is a 115-residue protein sequence, read N- to C-terminus: NADH-ubiquinone oxidoreductase chain 3 (115 aa).

3 consecutive transmembrane segments (helical) span residues 1 to 21 (MITL…LLII), 55 to 75 (FFLV…LFPL), and 87 to 107 (AIIL…YEWL).

This sequence belongs to the complex I subunit 3 family.

The protein resides in the mitochondrion membrane. The catalysed reaction is a ubiquinone + NADH + 5 H(+)(in) = a ubiquinol + NAD(+) + 4 H(+)(out). Functionally, core subunit of the mitochondrial membrane respiratory chain NADH dehydrogenase (Complex I) that is believed to belong to the minimal assembly required for catalysis. Complex I functions in the transfer of electrons from NADH to the respiratory chain. The immediate electron acceptor for the enzyme is believed to be ubiquinone. This Myxine glutinosa (Atlantic hagfish) protein is NADH-ubiquinone oxidoreductase chain 3 (MT-ND3).